Here is a 286-residue protein sequence, read N- to C-terminus: 4-diphosphocytidyl-2-C-methyl-D-erythritol kinase (286 aa).

Lys-10 is an active-site residue. Residue 100 to 110 coordinates ATP; sequence PMGSGLGGGSS. Asp-142 is a catalytic residue.

It belongs to the GHMP kinase family. IspE subfamily. In terms of assembly, homodimer.

It catalyses the reaction 4-CDP-2-C-methyl-D-erythritol + ATP = 4-CDP-2-C-methyl-D-erythritol 2-phosphate + ADP + H(+). Its pathway is isoprenoid biosynthesis; isopentenyl diphosphate biosynthesis via DXP pathway; isopentenyl diphosphate from 1-deoxy-D-xylulose 5-phosphate: step 3/6. Its function is as follows. Catalyzes the phosphorylation of the position 2 hydroxy group of 4-diphosphocytidyl-2C-methyl-D-erythritol. The chain is 4-diphosphocytidyl-2-C-methyl-D-erythritol kinase from Buchnera aphidicola subsp. Acyrthosiphon pisum (strain APS) (Acyrthosiphon pisum symbiotic bacterium).